The primary structure comprises 93 residues: Large ribosomal subunit protein uL23 (93 aa).

Belongs to the universal ribosomal protein uL23 family. As to quaternary structure, part of the 50S ribosomal subunit. Contacts protein L29, and trigger factor when it is bound to the ribosome.

One of the early assembly proteins it binds 23S rRNA. One of the proteins that surrounds the polypeptide exit tunnel on the outside of the ribosome. Forms the main docking site for trigger factor binding to the ribosome. In Campylobacter jejuni subsp. jejuni serotype O:2 (strain ATCC 700819 / NCTC 11168), this protein is Large ribosomal subunit protein uL23.